The chain runs to 137 residues: MLVPKRVKHRREFRGKMRGYAKGGDTISFGEYGLQATTSHWITNRQIEAARIAMTRYMKRNGQVWIKIFPHKSYTAKAIGVRMGSGKGAPEGWVAPVKRGVVMFELGGVDEATAREALRLASHKLPVKTKFVKRGEA.

This sequence belongs to the universal ribosomal protein uL16 family. Part of the 50S ribosomal subunit.

Binds 23S rRNA and is also seen to make contacts with the A and possibly P site tRNAs. This is Large ribosomal subunit protein uL16 from Lactococcus lactis subsp. lactis (strain IL1403) (Streptococcus lactis).